We begin with the raw amino-acid sequence, 120 residues long: Putative ankyrin repeat protein RBE_1215 (120 aa).

ANK repeat units lie at residues 22-52 (DGGN…LTNI) and 59-88 (FGDT…ITSV).

This chain is Putative ankyrin repeat protein RBE_1215, found in Rickettsia bellii (strain RML369-C).